The primary structure comprises 311 residues: Methionyl-tRNA formyltransferase (311 aa).

109 to 112 (SLLP) contributes to the (6S)-5,6,7,8-tetrahydrofolate binding site.

This sequence belongs to the Fmt family.

It carries out the reaction L-methionyl-tRNA(fMet) + (6R)-10-formyltetrahydrofolate = N-formyl-L-methionyl-tRNA(fMet) + (6S)-5,6,7,8-tetrahydrofolate + H(+). Attaches a formyl group to the free amino group of methionyl-tRNA(fMet). The formyl group appears to play a dual role in the initiator identity of N-formylmethionyl-tRNA by promoting its recognition by IF2 and preventing the misappropriation of this tRNA by the elongation apparatus. The polypeptide is Methionyl-tRNA formyltransferase (Acetivibrio thermocellus (strain ATCC 27405 / DSM 1237 / JCM 9322 / NBRC 103400 / NCIMB 10682 / NRRL B-4536 / VPI 7372) (Clostridium thermocellum)).